The chain runs to 180 residues: Ribosome maturation factor RimM (180 aa).

The PRC barrel domain occupies 97-176 (EGEFFYCDLI…KITTNNAKTL (80 aa)).

The protein belongs to the RimM family. Binds ribosomal protein uS19.

The protein localises to the cytoplasm. Functionally, an accessory protein needed during the final step in the assembly of 30S ribosomal subunit, possibly for assembly of the head region. Essential for efficient processing of 16S rRNA. May be needed both before and after RbfA during the maturation of 16S rRNA. It has affinity for free ribosomal 30S subunits but not for 70S ribosomes. The sequence is that of Ribosome maturation factor RimM from Helicobacter acinonychis (strain Sheeba).